The primary structure comprises 383 residues: Soluble hydrogenase 42 kDa subunit (383 aa).

At Lys-194 the chain carries N6-(pyridoxal phosphate)lysine.

Belongs to the class-V pyridoxal-phosphate-dependent aminotransferase family. In terms of assembly, heterodimer of a large and a small subunit. Pyridoxal 5'-phosphate is required as a cofactor.

The protein resides in the cytoplasm. Its function is as follows. Soluble hydrogenase catalyzes both production and consumption of hydrogen from suitable artificial electron donors or acceptors. This subunit catalyzes the tritium-exchange activity. This is Soluble hydrogenase 42 kDa subunit from Anabaena cylindrica.